The chain runs to 85 residues: RNA-binding protein Hfq (85 aa).

Residues 9 to 69 (DQLLNTARKD…ISTIIPAKII (61 aa)) form the Sm domain.

This sequence belongs to the Hfq family. Homohexamer.

Functionally, RNA chaperone that binds small regulatory RNA (sRNAs) and mRNAs to facilitate mRNA translational regulation in response to envelope stress, environmental stress and changes in metabolite concentrations. Also binds with high specificity to tRNAs. In Leptospira interrogans serogroup Icterohaemorrhagiae serovar copenhageni (strain Fiocruz L1-130), this protein is RNA-binding protein Hfq.